Reading from the N-terminus, the 961-residue chain is SH3 domain-binding protein 4 (961 aa).

The 60-residue stretch at 55-114 folds into the SH3 1 domain; sequence GNAKEVIAIKDYCPNNFTTLKFSKGDHLYVLDTSGGEWWYAHNTTEMGYIPSSYVQPLNY. A phosphoserine mark is found at Ser-131, Ser-244, Ser-249, Ser-277, and Ser-294. In terms of domain architecture, ZU5 spans 315-452; the sequence is TNIVCKLDSS…LEPCMYLAIV (138 aa). Ser-635 is subject to Phosphoserine. One can recognise an SH3 2 domain in the interval 652–722; it reads SSLKFGKLLK…HTKNVLVVGK (71 aa).

Homodimer or homooligomer. Interacts with DNM2, EPS15, clathrin, the adapter protein complex 2/AP-2 and TFRC. Interacts with the Rag GTPases RRAGA, RRAGB, RRAGC and RRAGD; the interaction is most probably direct, preferentially occurs with their inactive GDP-bound form and is negatively regulated by amino acids. Post-translationally, phosphorylated upon EGF stimulation. Phosphorylation prevents interaction with DNM2.

Its subcellular location is the membrane. The protein localises to the clathrin-coated pit. The protein resides in the cytoplasmic vesicle. It localises to the clathrin-coated vesicle. It is found in the nucleus. Its function is as follows. May function in transferrin receptor internalization at the plasma membrane through a cargo-specific control of clathrin-mediated endocytosis. Alternatively, may act as a negative regulator of the amino acid-induced TOR signaling by inhibiting the formation of active Rag GTPase complexes. Preferentially binds inactive Rag GTPase complexes and prevents their interaction with the mTORC1 complex inhibiting its relocalization to lysosomes and its activation. Thereby, may indirectly regulate cell growth, proliferation and autophagy. The sequence is that of SH3 domain-binding protein 4 (Sh3bp4) from Rattus norvegicus (Rat).